We begin with the raw amino-acid sequence, 20 residues long: Pregnancy-associated glycoprotein 73B (20 aa).

It belongs to the peptidase A1 family. N-glycosylated. Expressed in chorionic epithelium (trophectoderm).

The protein resides in the secreted. It is found in the extracellular space. The sequence is that of Pregnancy-associated glycoprotein 73B from Bubalus bubalis (Domestic water buffalo).